The following is a 345-amino-acid chain: Serine/threonine-protein kinase US3 homolog (345 aa).

The region spanning 49–334 (FSVLETFTPG…KALLDFAAFY (286 aa)) is the Protein kinase domain. ATP contacts are provided by residues 55–63 (FTPGAEGFT) and lysine 78. Aspartate 162 acts as the Proton acceptor in catalysis.

This sequence belongs to the protein kinase superfamily. Ser/Thr protein kinase family. Post-translationally, phosphorylated by UL13 homolog; this phosphorylation regulates subsequent phosphorylation of UL31 and UL34 homologs by US3. Autophosphorylated.

The protein localises to the host cytoplasm. It localises to the host nucleus. The catalysed reaction is L-seryl-[protein] + ATP = O-phospho-L-seryl-[protein] + ADP + H(+). The enzyme catalyses L-threonyl-[protein] + ATP = O-phospho-L-threonyl-[protein] + ADP + H(+). Functionally, multifunctional serine/threonine kinase that plays a role in several processes including egress of virus particles from the nucleus, modulation of the actin cytoskeleton and inhibition of apoptosis. Phosphorylates UL31 and UL34 homologs, two critical regulators of capsid budding from nucleus to endoplasmic reticulum, thereby facilitating virion egress. Modulates and redistributes host components of the nuclear envelope, including LMNA, emerin/EMD and the nuclear matrix protein MATR3. Phosphorylates envelope glycoprotein B (gB), probably to direct it to the cell surface. Promotes virus intracellular spread by restructuring host cell cytoskeleton. Blocks host apoptosis to extend cell survival and allow efficient viral replication. Promotes viral gene expression by phosphorylating host HDAC2 to reduce viral genome silencing. The polypeptide is Serine/threonine-protein kinase US3 homolog (US2) (Chlorocebus aethiops (Green monkey)).